The sequence spans 670 residues: Mannosyl-oligosaccharide alpha-1,2-mannosidase IA (670 aa).

Over 1–30 (MTGILPTYQRFVNGVPVPSISRRSFRLREK) the chain is Cytoplasmic. Residues 31–51 (YLIVSVLLTFGIVWLGALFYL) form a helical; Signal-anchor for type II membrane protein membrane-spanning segment. Topologically, residues 52-670 (PEFKSSNSVN…EPAHAQNNRI (619 aa)) are lumenal. The N-linked (GlcNAc...) asparagine glycan is linked to Asn-61. The interval 135 to 177 (DVAPSVSSSRGPSKPPVDAIEEPAVGNNAANKDVSPSGPKAES) is disordered. An intrachain disulfide couples Cys-480 to Cys-512. Residue Glu-526 is the Proton donor of the active site. Thr-637 is a Ca(2+) binding site.

The protein belongs to the glycosyl hydrolase 47 family. The cofactor is Ca(2+). Post-translationally, N-glycosylated. Contains high mannose-type oligosaccharides.

It is found in the golgi apparatus membrane. It catalyses the reaction N(4)-(alpha-D-Man-(1-&gt;2)-alpha-D-Man-(1-&gt;2)-alpha-D-Man-(1-&gt;3)-[alpha-D-Man-(1-&gt;2)-alpha-D-Man-(1-&gt;3)-[alpha-D-Man-(1-&gt;2)-alpha-D-Man-(1-&gt;6)]-alpha-D-Man-(1-&gt;6)]-beta-D-Man-(1-&gt;4)-beta-D-GlcNAc-(1-&gt;4)-beta-D-GlcNAc)-L-asparaginyl-[protein] (N-glucan mannose isomer 9A1,2,3B1,2,3) + 4 H2O = N(4)-(alpha-D-Man-(1-&gt;3)-[alpha-D-Man-(1-&gt;3)-[alpha-D-Man-(1-&gt;6)]-alpha-D-Man-(1-&gt;6)]-beta-D-Man-(1-&gt;4)-beta-D-GlcNAc-(1-&gt;4)-beta-D-GlcNAc)-L-asparaginyl-[protein] (N-glucan mannose isomer 5A1,2) + 4 beta-D-mannose. The enzyme catalyses N(4)-(alpha-D-Man-(1-&gt;2)-alpha-D-Man-(1-&gt;2)-alpha-D-Man-(1-&gt;3)-[alpha-D-Man-(1-&gt;3)-[alpha-D-Man-(1-&gt;2)-alpha-D-Man-(1-&gt;6)]-alpha-D-Man-(1-&gt;6)]-beta-D-Man-(1-&gt;4)-beta-D-GlcNAc-(1-&gt;4)-beta-D-GlcNAc)-L-asparaginyl-[protein] (N-glucan mannose isomer 8A1,2,3B1,3) + 3 H2O = N(4)-(alpha-D-Man-(1-&gt;3)-[alpha-D-Man-(1-&gt;3)-[alpha-D-Man-(1-&gt;6)]-alpha-D-Man-(1-&gt;6)]-beta-D-Man-(1-&gt;4)-beta-D-GlcNAc-(1-&gt;4)-beta-D-GlcNAc)-L-asparaginyl-[protein] (N-glucan mannose isomer 5A1,2) + 3 beta-D-mannose. Its pathway is protein modification; protein glycosylation. Its activity is regulated as follows. Strongly inhibited by 1-deoxymannojirimycin, an inhibitor of class I alpha-mannosidases, and by EDTA. EDTA inhibition is reversed by the addition of calcium, but not of magnesium. Its function is as follows. Involved in the maturation of Asn-linked oligosaccharides. Converts Man(9)GlcNAc(2) to Man(5)GlcNAc(2) primarily through the Man(7)GlcNAc(2) isomer C processing intermediate. The sequence is that of Mannosyl-oligosaccharide alpha-1,2-mannosidase IA from Spodoptera frugiperda (Fall armyworm).